A 169-amino-acid chain; its full sequence is 16S rRNA aminocarboxypropyltransferase (169 aa).

S-adenosyl-L-methionine-binding residues include Thr-17, Leu-67, Leu-90, and Thr-109.

The protein belongs to the TDD superfamily. TSR3 family.

The protein resides in the cytoplasm. It carries out the reaction an N(1)-methylpseudouridine in rRNA + S-adenosyl-L-methionine = N(1)-methyl-N(3)-[(3S)-3-amino-3-carboxypropyl]pseudouridine in rRNA + S-methyl-5'-thioadenosine + H(+). Aminocarboxypropyltransferase that catalyzes the aminocarboxypropyl transfer on pseudouridine corresponding to position 914 in M.jannaschii 16S rRNA. It constitutes the last step in biosynthesis of the hypermodified N1-methyl-N3-(3-amino-3-carboxypropyl) pseudouridine (m1acp3-Psi). The chain is 16S rRNA aminocarboxypropyltransferase from Methanothermobacter thermautotrophicus (strain ATCC 29096 / DSM 1053 / JCM 10044 / NBRC 100330 / Delta H) (Methanobacterium thermoautotrophicum).